Consider the following 510-residue polypeptide: Leucine-rich repeat-containing protein 14B (510 aa).

The stretch at 100–137 (SNRLRVADFTGIQDVQVQQCPCGRALGRWGRTKVLART) is one LRR 1; degenerate repeat. Residues 181–205 (QVCCPSLRADSLSPGQLLQVLGLAG) form an LRR 2; degenerate repeat. An LRR 4; degenerate repeat occupies 234–273 (FPQLTSLTLPTKAFDAPPTCAPDPEGEDLLLTSIAWELSQ). 5 LRR repeats span residues 274–298 (MNQLTELSVAFSTLTGKIQTLLSPL), 299–330 (KTPLRVLDLANCALNHEDISFLADCNHTAHLE), 331–349 (VLDLSGHNLVHLYPSTFFR), 355–382 (AQTLRVLTLEECNITDSHVNMMILGLSP), and 383–407 (CSQLQQFKFLGNPLSGSALRRLFAA).

This sequence belongs to the PRAME family. LRRC14 subfamily.

The sequence is that of Leucine-rich repeat-containing protein 14B from Mus musculus (Mouse).